We begin with the raw amino-acid sequence, 493 residues long: UDP-N-acetylmuramoyl-L-alanyl-D-glutamate--2,6-diaminopimelate ligase (493 aa).

Ser31 lines the UDP-N-acetyl-alpha-D-muramoyl-L-alanyl-D-glutamate pocket. ATP is bound at residue Gly111–Thr117. UDP-N-acetyl-alpha-D-muramoyl-L-alanyl-D-glutamate-binding positions include Asn152, Thr153 to Thr154, Ser180, and Arg188. N6-carboxylysine is present on Lys220. Residues Arg386, Asp410–Arg413, Gly462, and Glu466 each bind meso-2,6-diaminopimelate. The Meso-diaminopimelate recognition motif signature appears at Asp410–Arg413.

It belongs to the MurCDEF family. MurE subfamily. Requires Mg(2+) as cofactor. In terms of processing, carboxylation is probably crucial for Mg(2+) binding and, consequently, for the gamma-phosphate positioning of ATP.

The protein resides in the cytoplasm. The catalysed reaction is UDP-N-acetyl-alpha-D-muramoyl-L-alanyl-D-glutamate + meso-2,6-diaminopimelate + ATP = UDP-N-acetyl-alpha-D-muramoyl-L-alanyl-gamma-D-glutamyl-meso-2,6-diaminopimelate + ADP + phosphate + H(+). Its pathway is cell wall biogenesis; peptidoglycan biosynthesis. Functionally, catalyzes the addition of meso-diaminopimelic acid to the nucleotide precursor UDP-N-acetylmuramoyl-L-alanyl-D-glutamate (UMAG) in the biosynthesis of bacterial cell-wall peptidoglycan. The chain is UDP-N-acetylmuramoyl-L-alanyl-D-glutamate--2,6-diaminopimelate ligase (murE1) from Oceanobacillus iheyensis (strain DSM 14371 / CIP 107618 / JCM 11309 / KCTC 3954 / HTE831).